The chain runs to 354 residues: Protein RecA (354 aa).

ATP is bound at residue 67-74 (GPESSGKT).

It belongs to the RecA family.

The protein localises to the cytoplasm. Functionally, can catalyze the hydrolysis of ATP in the presence of single-stranded DNA, the ATP-dependent uptake of single-stranded DNA by duplex DNA, and the ATP-dependent hybridization of homologous single-stranded DNAs. It interacts with LexA causing its activation and leading to its autocatalytic cleavage. The sequence is that of Protein RecA from Enterobacter agglomerans (Erwinia herbicola).